We begin with the raw amino-acid sequence, 1363 residues long: Vascular endothelial growth factor receptor 3 (1363 aa).

An N-terminal signal peptide occupies residues 1-24 (MQPGAALNLRLWLCLGLLQGLANG). Residues 25 to 775 (YSMTPPTLNI…EGSEDKGSME (751 aa)) are Extracellular-facing. Residues asparagine 33, asparagine 104, asparagine 166, asparagine 251, asparagine 299, and asparagine 411 are each glycosylated (N-linked (GlcNAc...) asparagine). 7 Ig-like C2-type domains span residues 44-118 (GDSL…YIKA), 151-213 (KDSM…WGDQ), 230-326 (YDIQ…TEVI), 331-415 (PFIS…ISLE), 422-552 (PHIH…FYVT), 555-671 (PDGF…KYLS), and 678-764 (PRLT…ASVA). Intrachain disulfides connect cysteine 51–cysteine 111 and cysteine 158–cysteine 206. The cysteines at positions 252 and 310 are disulfide-linked. 3 disulfides stabilise this stretch: cysteine 445–cysteine 534, cysteine 466–cysteine 486, and cysteine 578–cysteine 653. 6 N-linked (GlcNAc...) asparagine glycosylation sites follow: asparagine 515, asparagine 527, asparagine 582, asparagine 594, asparagine 683, and asparagine 690. An intrachain disulfide couples cysteine 699 to cysteine 751. Asparagine 758 is a glycosylation site (N-linked (GlcNAc...) asparagine). A helical transmembrane segment spans residues 776-796 (IVILIGTGVIAVFFWVLLLLI). Topologically, residues 797–1363 (FCNMKRPAHA…GSTFFADSSY (567 aa)) are cytoplasmic. Phosphotyrosine; by SRC is present on residues tyrosine 830 and tyrosine 833. The Protein kinase domain maps to 845-1173 (LHLGRVLGHG…DLVEILGDLL (329 aa)). Residues 851 to 859 (LGHGAFGKV) and lysine 879 contribute to the ATP site. The Proton acceptor role is filled by aspartate 1037. At tyrosine 1063 the chain carries Phosphotyrosine; by autocatalysis and SRC. Tyrosine 1068, tyrosine 1230, tyrosine 1231, and tyrosine 1265 each carry phosphotyrosine; by autocatalysis. Positions 1288 to 1330 (ESRHRPEGSFSCKGPGQHMDIPRGHPDPQGRRRRPTQGAQGGK) are disordered. Residues 1307 to 1317 (DIPRGHPDPQG) are compositionally biased toward basic and acidic residues. Residues tyrosine 1333 and tyrosine 1337 each carry the phosphotyrosine; by autocatalysis and SRC modification. A Phosphotyrosine; by autocatalysis modification is found at tyrosine 1363.

It belongs to the protein kinase superfamily. Tyr protein kinase family. CSF-1/PDGF receptor subfamily. As to quaternary structure, interacts with VEGFC and VEGFD. Monomer in the absence of bound VEGFC or VEGFD. Homodimer in the presence of bound VEGFC or VEGFD. Can also form a heterodimer with KDR. Interacts with PTPN14; the interaction is enhanced by stimulation with VEGFC. Interacts with CRK, GRB2, PTK2/FAK1, SHC1, PIK3R1 and PTPN11/SHP-2. Identified in a complex with SRC and ITGB1. Post-translationally, autophosphorylated on tyrosine residues upon ligand binding. Autophosphorylation occurs in trans, i.e. one subunit of the dimeric receptor phosphorylates tyrosine residues on the other subunit. Phosphorylation in response to H(2)O(2) is mediated by a process that requires SRC and PRKCD activity. Phosphorylation at Tyr-1068 is required for autophosphorylation at additional tyrosine residues. Phosphorylation at Tyr-1063 and Tyr-1337 is important for interaction with CRK and subsequent activation of MAPK8. Phosphorylation at Tyr-1230, Tyr-1231 and Tyr-1337 is important for interaction with GRB2 and subsequent activation of the AKT1 and MAPK1/ERK2 and/or MAPK3/ERK1 signaling pathways. In response to endothelial cell adhesion onto collagen, can also be phosphorylated in the absence of FLT4 kinase activity by SRC. As to expression, expressed in adult lung and liver, and in fetal liver, brain, intestine and placenta.

Its subcellular location is the cell membrane. It localises to the cytoplasm. The protein resides in the nucleus. The enzyme catalyses L-tyrosyl-[protein] + ATP = O-phospho-L-tyrosyl-[protein] + ADP + H(+). Present in an inactive conformation in the absence of bound ligand. Binding of VEGFC or VEGFD leads to dimerization and activation by autophosphorylation on tyrosine residues. Tyrosine-protein kinase that acts as a cell-surface receptor for VEGFC and VEGFD, and plays an essential role in adult lymphangiogenesis and in the development of the vascular network and the cardiovascular system during embryonic development. Promotes proliferation, survival and migration of endothelial cells, and regulates angiogenic sprouting. Signaling by activated FLT4 leads to enhanced production of VEGFC, and to a lesser degree VEGFA, thereby creating a positive feedback loop that enhances FLT4 signaling. Modulates KDR signaling by forming heterodimers. Mediates activation of the MAPK1/ERK2, MAPK3/ERK1 signaling pathway, of MAPK8 and the JUN signaling pathway, and of the AKT1 signaling pathway. Phosphorylates SHC1. Mediates phosphorylation of PIK3R1, the regulatory subunit of phosphatidylinositol 3-kinase. Promotes phosphorylation of MAPK8 at 'Thr-183' and 'Tyr-185', and of AKT1 at 'Ser-473'. This is Vascular endothelial growth factor receptor 3 (Flt4) from Mus musculus (Mouse).